The chain runs to 309 residues: Uracil phosphoribosyltransferase homolog (309 aa).

The segment at 1–41 is disordered; it reads MATELQCPDSMPCHNQQVNSASTPSPEQLRPGDPILDHAGG. Residues 13 to 26 show a composition bias toward polar residues; it reads CHNQQVNSASTPSP. Serine 25 is subject to Phosphoserine. Residues arginine 133, arginine 142, and 176–179 each bind GTP; that span reads EKGN. Arginine 186 lines the 5-phospho-alpha-D-ribose 1-diphosphate pocket. Positions 203 and 232 each coordinate GTP. 238–246 is a 5-phospho-alpha-D-ribose 1-diphosphate binding site; that stretch reads YPILSTGNT. 299–301 is a uracil binding site; it reads THF.

This sequence belongs to the UPRTase family.

It is found in the cytoplasm. The protein resides in the nucleus. This Macaca fascicularis (Crab-eating macaque) protein is Uracil phosphoribosyltransferase homolog (UPRT).